Consider the following 530-residue polypeptide: UDP-glucuronosyltransferase 2B7 (530 aa).

The N-terminal stretch at 1-17 is a signal peptide; sequence MPQKWISALLLLQISFC. A glycan (N-linked (GlcNAc...) asparagine) is linked at Asn-316. UDP-alpha-D-glucuronate-binding positions include 374–380 and Glu-400; that span reads THGGANG. The helical transmembrane segment at 496–516 threads the bilayer; that stretch reads IGFLLACVLAIVLLAVKCCLF.

The protein belongs to the UDP-glycosyltransferase family.

It localises to the endoplasmic reticulum membrane. It carries out the reaction glucuronate acceptor + UDP-alpha-D-glucuronate = acceptor beta-D-glucuronoside + UDP + H(+). It catalyses the reaction 17alpha-estradiol + UDP-alpha-D-glucuronate = 17alpha-estradiol 17-O-(beta-D-glucuronate) + UDP + H(+). The catalysed reaction is 17beta-estradiol + UDP-alpha-D-glucuronate = 17beta-estradiol 17-O-(beta-D-glucuronate) + UDP + H(+). The enzyme catalyses 2-hydroxy-17beta-estradiol + UDP-alpha-D-glucuronate = 2-hydroxy-17beta-estradiol 3-O-(beta-D-glucuronate) + UDP + H(+). It carries out the reaction 4-hydroxy-17beta-estradiol + UDP-alpha-D-glucuronate = 17beta-estradiol 4-O-(beta-D-glucuronate) + UDP + H(+). It catalyses the reaction 4-hydroxyestrone + UDP-alpha-D-glucuronate = estrone 4-O-(beta-D-glucuronate) + UDP + H(+). The catalysed reaction is 16alpha-hydroxyestrone + UDP-alpha-D-glucuronate = 16alpha-hydroxyestrone 16-O-(beta-D-glucuronate) + UDP + H(+). The enzyme catalyses 16alpha,17beta-estriol + UDP-alpha-D-glucuronate = 16alpha,17beta-estriol 16-O-(beta-D-glucuronate) + UDP + H(+). It carries out the reaction 16beta,17beta-estriol + UDP-alpha-D-glucuronate = 16beta,17beta-estriol 16-O-(beta-D-glucuronate) + UDP + H(+). It catalyses the reaction 16alpha,17alpha-estriol + UDP-alpha-D-glucuronate = 16alpha,17alpha-estriol 16-O-(beta-D-glucuronate) + UDP + H(+). The catalysed reaction is 16alpha,17alpha-estriol + UDP-alpha-D-glucuronate = 16alpha,17alpha-estriol 17-O-(beta-D-glucuronate) + UDP + H(+). The enzyme catalyses epitestosterone + UDP-alpha-D-glucuronate = epitestosterone 17-O-(beta-D-glucuronate) + UDP + H(+). It carries out the reaction hyodeoxycholate + UDP-alpha-D-glucuronate = hyodeoxycholate 6-O-(beta-D-glucuronate) + UDP + H(+). It catalyses the reaction hyocholate + UDP-alpha-D-glucuronate = hyocholate 6-O-(beta-D-glucuronate) + UDP + H(+). The catalysed reaction is all-trans-retinoate + UDP-alpha-D-glucuronate = all-trans-retinoyl-1-O-(beta-D-glucuronate) + UDP. The enzyme catalyses all-trans-4-hydroxyretinoate + UDP-alpha-D-glucuronate = all-trans-4-hydroxy-4-O-(beta-D-glucuronide)-retinoate + UDP + H(+). It carries out the reaction (E)-ferulate + UDP-alpha-D-glucuronate = (E)-ferulic acid beta-D-glucuronate ester + UDP. It catalyses the reaction 8-iso-prostaglandin F2alpha + UDP-alpha-D-glucuronate = 8-iso-prostaglandin F2alpha-glucuronide + UDP + H(+). The catalysed reaction is 5-epi-5-F2t-IsoP + UDP-alpha-D-glucuronate = 5-epi-5-F2t-IsoP-glucuronide + UDP + H(+). The enzyme catalyses (5Z,8Z,11Z,14Z)-eicosatetraenoate + UDP-alpha-D-glucuronate = O-[(5Z),(8Z),(11Z),(14Z)-eicosatetraenoyl]-beta-D-glucuronate + UDP. It carries out the reaction 15-hydroxy-(5Z,8Z,11Z,13E)-eicosatetraenoate + UDP-alpha-D-glucuronate = 15-O-(beta-D-glucuronosyl)-(5Z,8Z,11Z,14Z)-eicosatetraenoate + UDP + H(+). It catalyses the reaction 20-hydroxy-(5Z,8Z,11Z,14Z)-eicosatetraenoate + UDP-alpha-D-glucuronate = 20-O-(beta-D-glucuronosyl)-(5Z,8Z,11Z,14Z)-eicosatetraenoate + UDP + H(+). The catalysed reaction is (E)-ferulate + UDP-alpha-D-glucuronate = (E)-4-O-(beta-D-glucuronosyl)-ferulate + UDP + H(+). The enzyme catalyses prostaglandin B1 + UDP-alpha-D-glucuronate = 15-O-(beta-D-glucuronosyl)-prostaglandin B1 + UDP + H(+). It carries out the reaction mycophenolate + UDP-alpha-D-glucuronate = mycophenolic acid O-acyl-beta-D-glucuronide + UDP. It catalyses the reaction losartan + UDP-alpha-D-glucuronate = losartan-2-N-beta-D-glucuronide + UDP. The catalysed reaction is candesartan + UDP-alpha-D-glucuronate = candesartan O-beta-D-glucuronoside + UDP. The enzyme catalyses candesartan + UDP-alpha-D-glucuronate = candesartan-2-N-beta-D-glucuronide + UDP. It carries out the reaction zolasartan + UDP-alpha-D-glucuronate = zolarsartan O-beta-D-glucuronoside + UDP. Its function is as follows. UDP-glucuronosyltransferase (UGT) that catalyzes phase II biotransformation reactions in which lipophilic substrates are conjugated with glucuronic acid to increase the metabolite's water solubility, thereby facilitating excretion into either the urine or bile. Essential for the elimination and detoxification of drugs, xenobiotics and endogenous compounds. Catalyzes the glucuronidation of endogenous steroid hormones such as androgens (epitestosterone, androsterone) and estrogens (estradiol, epiestradiol, estriol, catechol estrogens). Also regulates the levels of retinoic acid, a major metabolite of vitamin A involved in apoptosis, cellular growth and differentiation, and embryonic development. Contributes to bile acid (BA) detoxification by catalyzing the glucuronidation of BA substrates, which are natural detergents for dietary lipids absorption. Involved in the glucuronidation of arachidonic acid (AA) and AA-derived eicosanoids including 15-HETE, 20-HETE, PGE2, PGB1 and F2-isoprostanes (8-iso-PGF2alpha and 5-epi-5-F2t-IsoP). Involved in the glucuronidation of the phytochemical ferulic acid at the phenolic or the carboxylic acid group. Involved in the glucuronidation of the AGTR1 angiotensin receptor antagonist losartan, caderastan and zolarsatan, drugs which can inhibit the effect of angiotensin II. Also metabolizes mycophenolate, an immunosuppressive agent. In Rattus norvegicus (Rat), this protein is UDP-glucuronosyltransferase 2B7.